The primary structure comprises 400 residues: Queuine tRNA-ribosyltransferase (400 aa).

The Proton acceptor role is filled by D93. Substrate contacts are provided by residues 93 to 97 (DSGGF), D166, and G247. Residues 277 to 283 (GIGDVDD) form an RNA binding region. D296 functions as the Nucleophile in the catalytic mechanism. The RNA binding; important for wobble base 34 recognition stretch occupies residues 301–305 (TRLGR). Zn(2+) is bound by residues C338, C340, C343, and H369.

It belongs to the queuine tRNA-ribosyltransferase family. In terms of assembly, homodimer. Within each dimer, one monomer is responsible for RNA recognition and catalysis, while the other monomer binds to the replacement base PreQ1. Zn(2+) is required as a cofactor.

The catalysed reaction is 7-aminomethyl-7-carbaguanine + guanosine(34) in tRNA = 7-aminomethyl-7-carbaguanosine(34) in tRNA + guanine. The protein operates within tRNA modification; tRNA-queuosine biosynthesis. Catalyzes the base-exchange of a guanine (G) residue with the queuine precursor 7-aminomethyl-7-deazaguanine (PreQ1) at position 34 (anticodon wobble position) in tRNAs with GU(N) anticodons (tRNA-Asp, -Asn, -His and -Tyr). Catalysis occurs through a double-displacement mechanism. The nucleophile active site attacks the C1' of nucleotide 34 to detach the guanine base from the RNA, forming a covalent enzyme-RNA intermediate. The proton acceptor active site deprotonates the incoming PreQ1, allowing a nucleophilic attack on the C1' of the ribose to form the product. After dissociation, two additional enzymatic reactions on the tRNA convert PreQ1 to queuine (Q), resulting in the hypermodified nucleoside queuosine (7-(((4,5-cis-dihydroxy-2-cyclopenten-1-yl)amino)methyl)-7-deazaguanosine). This is Queuine tRNA-ribosyltransferase from Roseiflexus sp. (strain RS-1).